Here is a 51-residue protein sequence, read N- to C-terminus: Ribosomal protein eL39-like 2 (51 aa).

It belongs to the eukaryotic ribosomal protein eL39 family. As to quaternary structure, component of a male germ cell-specific 60S large ribosomal subunit (LSU), which contains RPL10L and RPL39L, instead of RPL10 and RPL39 paralogs. The composition of the rest of the complex is similar to classical ribosomes. As to expression, testis specific.

The protein resides in the cytoplasm. In terms of biological role, male germ cell-specific component of the ribosome, which is required for the formation of sperm and male fertility. Replaces the RPL39 paralog in the ribosome of male germ cells. The ribosome is a large ribonucleoprotein complex responsible for the synthesis of proteins in the cell. The male germ cell-specific ribosome displays a ribosomal polypeptide exit tunnel of distinct size and charge states compared with the classical ribosome. It is responsible for regulating the biosynthesis and folding of a subset of male germ-cell-specific proteins that are essential for the formation of sperm. The polypeptide is Ribosomal protein eL39-like 2 (Homo sapiens (Human)).